Reading from the N-terminus, the 309-residue chain is Genome polyprotein (309 aa).

Over 1–40 (GFADLMGYIPLVGAPLGGAARALAHGVRVLEDGVNYATGN) the chain is Cytoplasmic. The tract at residues 36-39 (YATG) is important for lipid droplets localization. A helical membrane pass occupies residues 41–61 (LPGCSFSIFLLALLSCLTVPA). Residues 50-63 (LLALLSCLTVPASA) constitute a propeptide, ER anchor for the core protein, removed in mature form by host signal peptidase. The Lumenal portion of the chain corresponds to 62–230 (SAYQVRNSSG…AGAHWGVLAG (169 aa)). Residues Asn-68, Asn-81, and Asn-106 are each glycosylated (N-linked (GlcNAc...) asparagine; by host). An important for fusion region spans residues 137–168 (LVGSATLCSALYVGDLCGSVFLVGQLFTFSPR). The N-linked (GlcNAc...) asparagine; by host glycan is linked to Asn-177. A helical transmembrane segment spans residues 231–251 (IAYFSMVGNWAKVLVVLLLFA). Residues 252 to 309 (GVDATTYTTGGNAARTTQALTSFFSPGAKQDIQLINTNGSWHINRTALNCNASLDTGW) are Lumenal-facing. The tract at residues 256–282 (TTYTTGGNAARTTQALTSFFSPGAKQD) is HVR1. Asn-289, Asn-295, and Asn-302 each carry an N-linked (GlcNAc...) (high mannose) asparagine; by host glycan.

This sequence belongs to the hepacivirus polyprotein family. As to quaternary structure, homooligomer. Interacts with E1 (via C-terminus). Interacts with the non-structural protein 5A. Interacts (via N-terminus) with host STAT1 (via SH2 domain); this interaction results in decreased STAT1 phosphorylation and ubiquitin-mediated proteasome-dependent STAT1 degradation, leading to decreased IFN-stimulated gene transcription. Interacts with host STAT3; this interaction constitutively activates STAT3. Interacts with host LTBR receptor. Interacts with host TNFRSF1A receptor and possibly induces apoptosis. Interacts with host HNRPK. Interacts with host YWHAE. Interacts with host UBE3A/E6AP. Interacts with host DDX3X. Interacts with host APOA2. Interacts with host RXRA protein. Interacts with host SP110 isoform 3/Sp110b; this interaction sequesters the transcriptional corepressor SP110 away from the nucleus. Interacts with host CREB3 nuclear transcription protein; this interaction triggers cell transformation. Interacts with host ACY3. Interacts with host C1QR1. Interacts with host RBM24; this interaction, which enhances the interaction of the mature core protein with 5'-UTR, may inhibit viral translation and favor replication. Interacts with host EIF2AK2/PKR; this interaction induces the autophosphorylation of EIF2AK2. Part of the viral assembly initiation complex composed of NS2, E1, E2, NS3, NS4A, NS5A and the mature core protein. In terms of assembly, forms a heterodimer with envelope glycoprotein E2. Interacts with mature core protein. Interacts with protease NS2. The heterodimer E1/E2 interacts with host CLDN1; this interaction plays a role in viral entry into host cell. Interacts with host SPSB2 (via C-terminus). Part of the viral assembly initiation complex composed of NS2, E1, E2, NS3, NS4A, NS5A and the mature core protein. Forms a heterodimer with envelope glycoprotein E1. Interacts with host CD81 and SCARB1 receptors; these interactions play a role in viral entry into host cell. Interacts with host EIF2AK2/PKR; this interaction inhibits EIF2AK2 and probably allows the virus to evade the innate immune response. Interacts with host CD209/DC-SIGN and CLEC4M/DC-SIGNR. Interact with host SPCS1; this interaction is essential for viral particle assembly. Interacts with protease NS2. The heterodimer E1/E2 interacts with host CLDN1; this interaction plays a role in viral entry into host cell. Part of the viral assembly initiation complex composed of NS2, E1, E2, NS3, NS4A, NS5A and the mature core protein. In terms of processing, specific enzymatic cleavages in vivo yield mature proteins. The structural proteins, core, E1, E2 and p7 are produced by proteolytic processing by host signal peptidases. The core protein precursor is synthesized as a 23 kDa, which is retained in the ER membrane through the hydrophobic signal peptide. Cleavage by the signal peptidase releases the 21 kDa mature core protein. The cleavage of the core protein precursor occurs between aminoacids 176 and 188 but the exact cleavage site is not known. Some degraded forms of the core protein appear as well during the course of infection. The other proteins (p7, NS2, NS3, NS4A, NS4B, NS5A and NS5B) are cleaved by the viral proteases. Autoprocessing between NS2 and NS3 is mediated by the NS2 cysteine protease catalytic domain and regulated by the NS3 N-terminal domain. Post-translationally, phosphorylated by host PKC and PKA. Ubiquitinated; mediated by UBE3A and leading to core protein subsequent proteasomal degradation. In terms of processing, highly N-glycosylated.

It is found in the host endoplasmic reticulum membrane. The protein localises to the host mitochondrion membrane. The protein resides in the virion. Its subcellular location is the host cytoplasm. It localises to the host nucleus. It is found in the host lipid droplet. The protein localises to the virion membrane. Functionally, packages viral RNA to form a viral nucleocapsid, and promotes virion budding. Participates in the viral particle production as a result of its interaction with the non-structural protein 5A. Binds RNA and may function as a RNA chaperone to induce the RNA structural rearrangements taking place during virus replication. Modulates viral translation initiation by interacting with viral IRES and 40S ribosomal subunit. Affects various cell signaling pathways, host immunity and lipid metabolism. Prevents the establishment of cellular antiviral state by blocking the interferon-alpha/beta (IFN-alpha/beta) and IFN-gamma signaling pathways and by blocking the formation of phosphorylated STAT1 and promoting ubiquitin-mediated proteasome-dependent degradation of STAT1. Activates STAT3 leading to cellular transformation. Regulates the activity of cellular genes, including c-myc and c-fos. May repress the promoter of p53, and sequester CREB3 and SP110 isoform 3/Sp110b in the cytoplasm. Represses cell cycle negative regulating factor CDKN1A, thereby interrupting an important check point of normal cell cycle regulation. Targets transcription factors involved in the regulation of inflammatory responses and in the immune response: suppresses TNF-induced NF-kappa-B activation, and activates AP-1. Binds to dendritic cells (DCs) via C1QR1, resulting in down-regulation of T-lymphocytes proliferation. Alters lipid metabolism by interacting with hepatocellular proteins involved in lipid accumulation and storage. Induces up-regulation of FAS promoter activity, and thereby contributes to the increased triglyceride accumulation in hepatocytes (steatosis). In terms of biological role, forms a heterodimer with envelope glycoprotein E2, which mediates virus attachment to the host cell, virion internalization through clathrin-dependent endocytosis and fusion with host membrane. Fusion with the host cell is most likely mediated by both E1 and E2, through conformational rearrangements of the heterodimer required for fusion rather than a classical class II fusion mechanism. E1/E2 heterodimer binds host apolipoproteins such as APOB and ApoE thereby forming a lipo-viro-particle (LVP). APOE associated to the LVP allows the initial virus attachment to cell surface receptors such as the heparan sulfate proteoglycans (HSPGs), syndecan-1 (SDC1), syndecan-1 (SDC2), the low-density lipoprotein receptor (LDLR) and scavenger receptor class B type I (SCARB1). The cholesterol transfer activity of SCARB1 allows E2 exposure and binding of E2 to SCARB1 and the tetraspanin CD81. E1/E2 heterodimer binding on CD81 activates the epithelial growth factor receptor (EGFR) signaling pathway. Diffusion of the complex E1-E2-EGFR-SCARB1-CD81 to the cell lateral membrane allows further interaction with Claudin 1 (CLDN1) and occludin (OCLN) to finally trigger HCV entry. Forms a heterodimer with envelope glycoprotein E1, which mediates virus attachment to the host cell, virion internalization through clathrin-dependent endocytosis and fusion with host membrane. Fusion with the host cell is most likely mediated by both E1 and E2, through conformational rearrangements of the heterodimer required for fusion rather than a classical class II fusion mechanism. The interaction between envelope glycoprotein E2 and host apolipoprotein E/APOE allows the proper assembly, maturation and infectivity of the viral particles. This interaction is probably promoted via the up-regulation of cellular autophagy by the virus. E1/E2 heterodimer binds host apolipoproteins such as APOB and APOE thereby forming a lipo-viro-particle (LVP). APOE associated to the LVP allows the initial virus attachment to cell surface receptors such as the heparan sulfate proteoglycans (HSPGs), syndecan-1 (SDC1), syndecan-1 (SDC2), the low-density lipoprotein receptor (LDLR) and scavenger receptor class B type I (SCARB1). The cholesterol transfer activity of SCARB1 allows E2 exposure and binding of E2 to SCARB1 and the tetraspanin CD81. E1/E2 heterodimer binding on CD81 activates the epithelial growth factor receptor (EGFR) signaling pathway. Diffusion of the complex E1-E2-EGFR-SCARB1-CD81 to the cell lateral membrane allows further interaction with Claudin 1 (CLDN1) and occludin (OCLN) to finally trigger HCV entry. Inhibits host EIF2AK2/PKR activation, preventing the establishment of an antiviral state. Viral ligand for CD209/DC-SIGN and CLEC4M/DC-SIGNR, which are respectively found on dendritic cells (DCs), and on liver sinusoidal endothelial cells and macrophage-like cells of lymph node sinuses. These interactions allow the capture of circulating HCV particles by these cells and subsequent facilitated transmission to permissive cells such as hepatocytes and lymphocyte subpopulations. The chain is Genome polyprotein from Hepatitis C virus (isolate HCT27) (HCV).